Reading from the N-terminus, the 401-residue chain is Probable sodium/metabolite cotransporter BASS5, chloroplastic (401 aa).

The transit peptide at 1 to 46 directs the protein to the chloroplast; that stretch reads MAPNAAVLVRPHIAGVHHLPTGRRLPRLAPPQAVSPPFSRQKGSVV. A run of 9 helical transmembrane segments spans residues 93 to 113, 122 to 142, 159 to 179, 185 to 205, 215 to 235, 247 to 267, 273 to 293, 299 to 319, and 372 to 392; these read TIIP…PPSF, APAL…KDFI, FIIK…IFNL, AGIM…ATFL, IVMT…LSYF, GMMS…LLLN, LCSA…ALCV, INIK…LFAF, and LVGV…FALV.

The protein belongs to the bile acid:sodium symporter (BASS) (TC 2.A.28) family.

It is found in the membrane. Its subcellular location is the plastid. The protein resides in the chloroplast envelope. Functionally, may function as sodium-coupled metabolite transporter across the chloroplast envelope. The sequence is that of Probable sodium/metabolite cotransporter BASS5, chloroplastic (BASS5) from Oryza sativa subsp. indica (Rice).